Reading from the N-terminus, the 439-residue chain is Homeobox protein ceh-32 (439 aa).

The homeobox DNA-binding region spans 183–243 (WDGEQKTHCF…KNRRQRDRAA (61 aa)). Disordered regions lie at residues 253–293 (GVEL…SHIP), 344–365 (EEEN…KKRS), and 379–439 (VSPS…SQSE). Composition is skewed to acidic residues over residues 264-274 (SDSDDDFEDSM) and 344-358 (EEEN…EADI). Positions 379–392 (VSPSQCSPCSNESL) are enriched in polar residues. The span at 398-428 (VKTEEVKKEDDEAAEEDSRSVKSETSEDPKH) shows a compositional bias: basic and acidic residues.

It belongs to the SIX/Sine oculis homeobox family. As to quaternary structure, interacts with gmn-1. As to expression, expressed in the posterior gonad. Expressed in some cells in the head that are probably neurons. Expressed in the dorsal and ventral neuron RMD pair and the inner labial neuron class IL1. Not expressed in BAG neurons.

It localises to the nucleus. Functionally, transcription factor which binds a motif with the core sequence 5'-GTATCA-3'. Plays a role in head morphogenesis. Involved in embryonic development. Required for cell specification of the RIA interneurons. May cooperate with the transcription factor vab-3 and phosphatase eya-1 to repress transcription factor ets-5 expression in non BAG neuronal cells. This chain is Homeobox protein ceh-32, found in Caenorhabditis elegans.